Reading from the N-terminus, the 487-residue chain is uncharacterized protein (487 aa).

The N-terminal stretch at 1-31 is a signal peptide; it reads MRFHRQGISAIIGVLLIVLLGFCWKLSGSYG. N-linked (GlcNAc...) asparagine glycosylation is found at asparagine 40, asparagine 68, asparagine 150, asparagine 220, asparagine 304, asparagine 367, asparagine 442, and asparagine 448. Positions 141–176 are disordered; sequence LERRHGRFGNGTNGDHPKGPPPPPPPPDEKGRGSQK.

N-glycosylated.

This is an uncharacterized protein from Saccharomyces cerevisiae (strain ATCC 204508 / S288c) (Baker's yeast).